A 756-amino-acid chain; its full sequence is Putative beta-xylosidase (756 aa).

The N-terminal stretch at 1-18 (MKKLLFTFLVSTGTIFFS) is a signal peptide. Cysteine 19 carries N-palmitoyl cysteine lipidation. Residue cysteine 19 is the site of S-diacylglycerol cysteine attachment.

The protein belongs to the glycosyl hydrolase 3 family.

Its subcellular location is the cell outer membrane. Functionally, glycoside hydrolase probably involved in ulvan degradation. Ulvan is the main polysaccharide component of the Ulvales (green seaweed) cell wall. It is composed of disaccharide building blocks comprising 3-sulfated rhamnose (Rha3S) linked to D-glucuronic acid (GlcA), L-iduronic acid (IduA), or D-xylose (Xyl). In Formosa agariphila (strain DSM 15362 / KCTC 12365 / LMG 23005 / KMM 3901 / M-2Alg 35-1), this protein is Putative beta-xylosidase.